The primary structure comprises 216 residues: Endoplasmic reticulum vesicle protein 25 (216 aa).

The signal sequence occupies residues 1-21 (MMVSLKSSLFFMLALLTVVHA). The Lumenal portion of the chain corresponds to 22–184 (LNFDIPAKTN…TNESTNERVK (163 aa)). Positions 34–150 (PFCLREYVGE…LEPVEADIRR (117 aa)) constitute a GOLD domain. A helical membrane pass occupies residues 185–205 (NFAYLTFISLFVLVIWQILYL). The Cytoplasmic segment spans residues 206-216 (RSFFQRKHLIP).

This sequence belongs to the EMP24/GP25L family.

The protein localises to the endoplasmic reticulum membrane. It is found in the golgi apparatus membrane. In terms of biological role, constituent of COPII-coated endoplasmic reticulum-derived transport vesicles. Required for efficient transport of a subset of secretory proteins to the Golgi. Facilitates retrograde transport from the Golgi to the endoplasmic reticulum. The sequence is that of Endoplasmic reticulum vesicle protein 25 (erv25) from Schizosaccharomyces pombe (strain 972 / ATCC 24843) (Fission yeast).